A 616-amino-acid chain; its full sequence is MAAKQKNYATETFTDPERIRNFCIIAHIDHGKSTLADRILQMSGVVEDRDMRDQYLDNMDIERERGITIKAQNVRLPWVPKTGAHAGEELVMHLIDTPGHVDFTYEVSRALEACEGCILLVDAAQGIEAQTLANLYLAMENDLEIIPVLNKIDLPAADPDKYALEIAHIIGCEPEDVLRVSGKTGEGVSELLDRVCELVPAPVGDADAPARAMIFDSVYDIYRGVVTYVRMMDGKLESRQKIQMMSTGATHETLEIGVVSPEPTKTKGLGVGEVGYIITGVKDVRQSKVGDTITWAVNGAETPLKGYQEPTPMVYSGLFPISADQYPDLREAIEKLQLNDASLTFEPETSVALGFGFRCGFLGLLHMEITRARLEREFDLDLISTAPSVVYRVVKEDGSEVMVRNPSDWPGGKMREIYEPIVKMTVIVPAEFLGATMELCQSKRGQMGGMDYLSEDRVELRYTMPLGEIIFDFFDQLKSRTKGYASLNYEEAGEQLADLVKVDILLQGDPVDAFSAIVHRENAHWYGNKMTVKLKELIPRQQFEVPVQAAIGSKIIARENIRALRKDVLSKCYGGDVSRKRKLLEKQKEGKKRMKAIGSVSVPQEAFVAALSTDAD.

In terms of domain architecture, tr-type G spans 17-203 (ERIRNFCIIA…RVCELVPAPV (187 aa)). GTP is bound by residues 29-34 (DHGKST) and 150-153 (NKID).

The protein belongs to the TRAFAC class translation factor GTPase superfamily. Classic translation factor GTPase family. LepA subfamily.

It localises to the cell membrane. The catalysed reaction is GTP + H2O = GDP + phosphate + H(+). Its function is as follows. Required for accurate and efficient protein synthesis under certain stress conditions. May act as a fidelity factor of the translation reaction, by catalyzing a one-codon backward translocation of tRNAs on improperly translocated ribosomes. Back-translocation proceeds from a post-translocation (POST) complex to a pre-translocation (PRE) complex, thus giving elongation factor G a second chance to translocate the tRNAs correctly. Binds to ribosomes in a GTP-dependent manner. This Corynebacterium jeikeium (strain K411) protein is Elongation factor 4.